The sequence spans 399 residues: Centrosomal protein 43 (399 aa).

Residues 70 to 102 (DGRLVASLVAEFLQFFNLDFTLAVFHPETSTIQ) form the LisH domain. The segment at 139–217 (EKGPTSVEGA…LSESKSKSSL (79 aa)) is disordered. T143 carries the phosphothreonine modification. 2 positions are modified to phosphoserine: S152 and S160. A compositionally biased stretch (polar residues) spans 163 to 172 (GKTSVNSTPS). T170 is modified (phosphothreonine). A compositionally biased stretch (basic residues) spans 175 to 186 (PRYKGQGKKKTS). Low complexity predominate over residues 197-217 (SETSQSEPSVSLSESKSKSSL). The residue at position 202 (S202) is a Phosphoserine. Residue T234 is modified to Phosphothreonine. A disordered region spans residues 239 to 309 (DKSALCPDED…PSLTDAESKR (71 aa)). Positions 245–256 (PDEDDVEGDSFF) are enriched in acidic residues. The span at 259–275 (PIPKPEKTYGWRSEPRK) shows a compositional bias: basic and acidic residues. The span at 290-302 (RSGLSSLAGAPSL) shows a compositional bias: low complexity. Phosphoserine is present on residues S301, S326, and S331. A disordered region spans residues 328 to 357 (GLGSGEDEDYVDDFNSASHRSEKSELSIGE). Y337 is modified (phosphotyrosine).

The protein belongs to the CEP43 family. In terms of assembly, homodimer. Part of a ternary complex that contains CEP350, CEP43 and MAPRE1. Interacts directly with CEP350 and MAPRE1. Interacts with CEP19. Interacts (via N-terminus) with CEP350 (via C-terminus).

The protein localises to the cytoplasm. Its subcellular location is the cytoskeleton. It is found in the microtubule organizing center. The protein resides in the centrosome. It localises to the centriole. The protein localises to the cilium basal body. Functionally, required for anchoring microtubules to the centrosomes. Required for ciliation. This is Centrosomal protein 43 (Cep43) from Rattus norvegicus (Rat).